We begin with the raw amino-acid sequence, 938 residues long: Protein translocase subunit SecA (938 aa).

ATP-binding positions include Gln-90, 108–112 (GEGKT), and Asp-504.

This sequence belongs to the SecA family. As to quaternary structure, monomer and homodimer. Part of the essential Sec protein translocation apparatus which comprises SecA, SecYEG and auxiliary proteins SecDF. Other proteins may also be involved.

The protein resides in the cell inner membrane. The protein localises to the cellular thylakoid membrane. It localises to the cytoplasm. The catalysed reaction is ATP + H2O + cellular proteinSide 1 = ADP + phosphate + cellular proteinSide 2.. Part of the Sec protein translocase complex. Interacts with the SecYEG preprotein conducting channel. Has a central role in coupling the hydrolysis of ATP to the transfer of proteins into and across the cell membrane, serving as an ATP-driven molecular motor driving the stepwise translocation of polypeptide chains across the membrane. In terms of biological role, probably participates in protein translocation into and across both the cytoplasmic and thylakoid membranes in cyanobacterial cells. The sequence is that of Protein translocase subunit SecA from Microcystis aeruginosa (strain NIES-843 / IAM M-2473).